The primary structure comprises 282 residues: Small ribosomal subunit protein uS3 (282 aa).

The region spanning Ile-43–Lys-111 is the KH type-2 domain. The segment at Ala-217–Ala-282 is disordered. A compositionally biased stretch (basic and acidic residues) spans Arg-228–Ala-240. Residues Ala-256–Thr-269 are compositionally biased toward low complexity.

The protein belongs to the universal ribosomal protein uS3 family. In terms of assembly, part of the 30S ribosomal subunit. Forms a tight complex with proteins S10 and S14.

Its function is as follows. Binds the lower part of the 30S subunit head. Binds mRNA in the 70S ribosome, positioning it for translation. The protein is Small ribosomal subunit protein uS3 of Kineococcus radiotolerans (strain ATCC BAA-149 / DSM 14245 / SRS30216).